Here is a 378-residue protein sequence, read N- to C-terminus: GDP-mannose 3,5-epimerase 1 (378 aa).

NAD(+)-binding positions include 36-62 (GAGGFIGSHIARRLKSEGHYIIASDWK), D60, and D80. Substrate-binding positions include G105 and 145–147 (SAC). Residues Y175 and K179 each coordinate NAD(+). Y175 serves as the catalytic Proton acceptor. Residues N204, 217-219 (EKA), K226, 242-244 (QTR), R307, and S357 contribute to the substrate site.

This sequence belongs to the NAD(P)-dependent epimerase/dehydratase family. As to quaternary structure, homodimer. The cofactor is NAD(+).

The catalysed reaction is GDP-alpha-D-mannose = GDP-beta-L-gulose. It carries out the reaction GDP-beta-L-gulose = GDP-beta-L-galactose. Its pathway is cofactor biosynthesis; L-ascorbate biosynthesis via GDP-alpha-D-mannose pathway; L-ascorbate from GDP-alpha-D-mannose: step 1/5. Strongly activated by NAD. Activated by NADP. Slightly activated by NADH and NADPH. Inhibited by GDP. Catalyzes a reversible epimerization of GDP-D-mannose that precedes the committed step in the biosynthesis of vitamin C (L-ascorbate), resulting in the hydrolysis of the highly energetic glycosyl-pyrophosphoryl linkage. Able to catalyze 2 distinct epimerization reactions and can release both GDP-L-galactose and GDP-L-gulose from GDP-mannose. In Oryza sativa subsp. japonica (Rice), this protein is GDP-mannose 3,5-epimerase 1 (GME-1).